A 1981-amino-acid polypeptide reads, in one-letter code: Nonribosomal peptide synthetase rstn8 (1981 aa).

Positions 251-638 (SYAALEQESA…ELGEIEYQAS (388 aa)) are adenylation. The 78-residue stretch at 763–840 (HHAGQKYDEM…ELFHRSQKTP (78 aa)) folds into the Carrier 1 domain. Ser800 is modified (O-(pantetheine 4'-phosphoryl)serine). The interval 883-1293 (EDIYPCSPLQ…DASMGTILSQ (411 aa)) is condensation 1. The Carrier 2 domain occupies 1438–1514 (EPLLPLEATL…CLASTLNSRP (77 aa)). Ser1475 bears the O-(pantetheine 4'-phosphoryl)serine mark. Positions 1586 to 1978 (EEQIDLVSFA…TFAQSIERII (393 aa)) are condensation 1. The tract at residues 1754 to 1774 (HHHHQHEGRQHHGASETNGNR) is disordered.

This sequence belongs to the NRP synthetase family. It depends on pantetheine 4'-phosphate as a cofactor.

It carries out the reaction 2 L-tryptophan = cyclo(L-Trp-L-Trp) + 2 H2O. The protein operates within alkaloid biosynthesis. Functionally, nonribosomal peptide synthetase; part of the gene cluster that mediates the biosynthesis of okaramine B, a prenylated indole alkaloid that possesses an unusual octacyclic ring system, including a four-membered azetidine ring and an eight-membered azocine ring, and that exhibits insecticidal activity against silkworm larvae. Within the pathway, okaA acts as a bimodular non-ribosomal peptide synthetase (NRPS) that condenses two tryptophan molecules into cyclo(L-Trp-L-Trp). Prenylation by the prenyltransferase okaC then leads to the formation of cyclo(N8-(alpha,alpha-dimethylallyl)-L-Trp-6a-(alpha,alpha-dime-thylallyl)-L-Trp). This is followed by indole 2,3-epoxidation by the FAD-dependent monooxygenase okaB to facilitate the formation of the hexahydropyrrolo[2,3-b]indole (HPI) moiety of okaramine C. The cytochrome P450 monooxygenase okaD then likely catalyzes formation of the eight-membered ring of okaramine A. The dioxygenase okaE further forms the unusual 2-dimethyl-3-methyl-azetidine ring to yield 12-deshydroxyl okaramine E, as well as the hydroxylation of 12-deshydroxyl okaramine E to produce okaramine E. The cytochrome P450 monoxygenase okaG converts 12-deshydroxyl okaramine E into 3-desmethyl okaramine B which is further methylated by the methyltransferase okaF into okaramine B. In a shunt pathway, okaG and okaF together are also able to convert okaramine E into okaramine D. Okaramine H is produced by nonenzymatic conversion from okaramine A. This is Nonribosomal peptide synthetase rstn8 from Penicillium ochrochloron.